The chain runs to 309 residues: NAD-dependent protein deacylase sirtuin-5, mitochondrial (309 aa).

The transit peptide at 1-35 (MILLPFHTRRLVSHVYCGLKPASKKKGIALEMARP) directs the protein to the mitochondrion. In terms of domain architecture, Deacetylase sirtuin-type spans 36-306 (SSNLADFREA…PPAIARHETE (271 aa)). NAD(+) is bound at residue 57 to 76 (GAGVSAESGVPTFRGAGGYW). The substrate site is built by tyrosine 101 and arginine 104. 139 to 142 (QNID) serves as a coordination point for NAD(+). Catalysis depends on histidine 157, which acts as the Proton acceptor. Zn(2+)-binding residues include cysteine 165, cysteine 168, cysteine 206, and cysteine 211. NAD(+)-binding positions include 248–250 (GTS), 274–276 (NME), and cysteine 292.

The protein belongs to the sirtuin family. Class III subfamily. The cofactor is Zn(2+).

The protein localises to the mitochondrion. The protein resides in the cytoplasm. Its subcellular location is the cytosol. It is found in the nucleus. The enzyme catalyses N(6)-malonyl-L-lysyl-[protein] + NAD(+) + H2O = 2''-O-malonyl-ADP-D-ribose + nicotinamide + L-lysyl-[protein]. The catalysed reaction is N(6)-succinyl-L-lysyl-[protein] + NAD(+) + H2O = 2''-O-succinyl-ADP-D-ribose + nicotinamide + L-lysyl-[protein]. It carries out the reaction N(6)-glutaryl-L-lysyl-[protein] + NAD(+) + H2O = 2''-O-glutaryl-ADP-D-ribose + nicotinamide + L-lysyl-[protein]. In terms of biological role, NAD-dependent lysine demalonylase, desuccinylase and deglutarylase that specifically removes malonyl, succinyl and glutaryl groups on target proteins. Has weak NAD-dependent protein deacetylase activity; however this activity may not be physiologically relevant in vivo. This is NAD-dependent protein deacylase sirtuin-5, mitochondrial (sirt5) from Xenopus tropicalis (Western clawed frog).